The following is a 388-amino-acid chain: Na(+)/H(+) antiporter NhaA (388 aa).

The next 12 membrane-spanning stretches (helical) occupy residues 14–34 (TIGILLIIATLLALFLENSPL), 59–79 (LLLWVNDGLMAVFFFYVGLEI), 95–115 (TFPAIAALGGMVVPALLFASL), 125–145 (GWAIPTATDIAFALGVLSLLG), 154–174 (VFLMTLAIVDDLGAIIVIALF), 177–197 (TKLSLTSLVVASIALTILFIM), 200–220 (MCVISKGAYILVGVALWVSVL), 222–242 (SGVHATLAGVALALLIPYRIN), 257–277 (GLHLWVNFFILPLFAFANAGV), 295–315 (IMLGLFIGKQLGVFGFGYLAV), 328–348 (LIQFYGVAVLAGIGFTMSLFI), and 362–382 (ADKLAVLIGSLLSGIWGYIVL).

Belongs to the NhaA Na(+)/H(+) (TC 2.A.33) antiporter family.

The protein resides in the cell inner membrane. The catalysed reaction is Na(+)(in) + 2 H(+)(out) = Na(+)(out) + 2 H(+)(in). Na(+)/H(+) antiporter that extrudes sodium in exchange for external protons. This Nitratiruptor sp. (strain SB155-2) protein is Na(+)/H(+) antiporter NhaA.